Reading from the N-terminus, the 88-residue chain is Small ribosomal subunit protein uS15 (88 aa).

It belongs to the universal ribosomal protein uS15 family. Part of the 30S ribosomal subunit. Forms a bridge to the 50S subunit in the 70S ribosome, contacting the 23S rRNA.

Functionally, one of the primary rRNA binding proteins, it binds directly to 16S rRNA where it helps nucleate assembly of the platform of the 30S subunit by binding and bridging several RNA helices of the 16S rRNA. Forms an intersubunit bridge (bridge B4) with the 23S rRNA of the 50S subunit in the ribosome. This chain is Small ribosomal subunit protein uS15, found in Mesomycoplasma flocculare (Mycoplasma flocculare).